The sequence spans 759 residues: DNA topoisomerase 3 (759 aa).

Residues 3 to 147 (RALFVAEKND…RLDIFRARFS (145 aa)) enclose the Toprim domain. A Topo IA-type catalytic domain is found at 165 to 590 (DEKTVAAVDC…EQIGKYRAIF (426 aa)). The active-site O-(5'-phospho-DNA)-tyrosine intermediate is tyrosine 334. Residues 609 to 715 (DKNNQAGGGP…KEQEEEEEVF (107 aa)) are disordered. Gly residues predominate over residues 614 to 639 (AGGGPGGPGGGGGPPRGPGGGGGGGP). Residues 640-649 (TGPPAPPKPP) are compositionally biased toward pro residues. Positions 716, 718, 743, and 753 each coordinate Zn(2+). The segment at 716–759 (CQCPEPMRAVTKVVQKEGPNKGKKFYTCSLPYTSSEKCNFFKWA) adopts a GRF-type zinc-finger fold.

Belongs to the type IA topoisomerase family. As to quaternary structure, component of the BTR double Holliday Junction dissolution complex composed of at least him-6, top-3, rmh-1 and rmif-2, which is involved in double strand break repair in the germline. May interact with rmh-1.

It is found in the nucleus. The enzyme catalyses ATP-independent breakage of single-stranded DNA, followed by passage and rejoining.. Its function is as follows. Component of the BTR double Holliday Junction dissolution complex, which is involved in homologous recombination during meiotic double strand break in the germline. Releases the supercoiling and torsional tension of DNA introduced during the DNA replication and transcription by transiently cleaving and rejoining one strand of the DNA duplex. Introduces a single-strand break via transesterification at a target site in duplex DNA. The scissile phosphodiester is attacked by the catalytic tyrosine of the enzyme, resulting in the formation of a DNA-(5'-phosphotyrosyl)-enzyme intermediate and the expulsion of a 3'-OH DNA strand. The free DNA strand than undergoes passage around the unbroken strand thus removing DNA supercoils. Finally, in the religation step, the DNA 3'-OH attacks the covalent intermediate to expel the active-site tyrosine and restore the DNA phosphodiester backbone. The polypeptide is DNA topoisomerase 3 (Caenorhabditis elegans).